The primary structure comprises 322 residues: Ribose-phosphate pyrophosphokinase (322 aa).

ATP is bound by residues 43–45 (DGE) and 102–103 (RQ). His137 and Asp177 together coordinate Mg(2+). The active site involves Lys201. D-ribose 5-phosphate contacts are provided by residues Arg203, Asp227, and 231–235 (DTAGT).

Belongs to the ribose-phosphate pyrophosphokinase family. Class I subfamily. In terms of assembly, homohexamer. Mg(2+) serves as cofactor.

Its subcellular location is the cytoplasm. It catalyses the reaction D-ribose 5-phosphate + ATP = 5-phospho-alpha-D-ribose 1-diphosphate + AMP + H(+). It participates in metabolic intermediate biosynthesis; 5-phospho-alpha-D-ribose 1-diphosphate biosynthesis; 5-phospho-alpha-D-ribose 1-diphosphate from D-ribose 5-phosphate (route I): step 1/1. In terms of biological role, involved in the biosynthesis of the central metabolite phospho-alpha-D-ribosyl-1-pyrophosphate (PRPP) via the transfer of pyrophosphoryl group from ATP to 1-hydroxyl of ribose-5-phosphate (Rib-5-P). The protein is Ribose-phosphate pyrophosphokinase of Xylella fastidiosa (strain 9a5c).